Reading from the N-terminus, the 147-residue chain is D-aminoacyl-tRNA deacylase (147 aa).

The Gly-cisPro motif, important for rejection of L-amino acids signature appears at 136–137 (GP).

The protein belongs to the DTD family. As to quaternary structure, homodimer.

The protein localises to the cytoplasm. The catalysed reaction is glycyl-tRNA(Ala) + H2O = tRNA(Ala) + glycine + H(+). It catalyses the reaction a D-aminoacyl-tRNA + H2O = a tRNA + a D-alpha-amino acid + H(+). Functionally, an aminoacyl-tRNA editing enzyme that deacylates mischarged D-aminoacyl-tRNAs. Also deacylates mischarged glycyl-tRNA(Ala), protecting cells against glycine mischarging by AlaRS. Acts via tRNA-based rather than protein-based catalysis; rejects L-amino acids rather than detecting D-amino acids in the active site. By recycling D-aminoacyl-tRNA to D-amino acids and free tRNA molecules, this enzyme counteracts the toxicity associated with the formation of D-aminoacyl-tRNA entities in vivo and helps enforce protein L-homochirality. The polypeptide is D-aminoacyl-tRNA deacylase (Streptococcus equi subsp. zooepidemicus (strain MGCS10565)).